The following is a 298-amino-acid chain: MFERDEHHFPVKRLLLLGALVGAGAYYLSREQNRKALDAKLAELGLKDAAQDVGSSVTKGWEKTKDAAQNAGSVIADKAQDVAGEVKSAVAGATAEIKDAGKEVADTAKDAGQNVGQNVKREAADLADQAKDKAQDVKADVSKAADQAKDKAQDVAQNVQAGAQQAAANVKDKVQDVKADASKAADQAKDKAQDVAQNVKQGAQQAASDAKDKVQDVKADASRAADQAKDKAQDVAQNVKQSAQDAKTDVDAKAKSWAFDLRTDAEAGKQGGQTGSTTNNAGTAGNTGMTGNTNTRKN.

LEA-like repeat units follow at residues aspartate 48 to glutamine 117, aspartate 128 to glutamine 197, and glutamine 201 to glutamine 270. A compositionally biased stretch (basic and acidic residues) spans valine 174 to glutamine 193. The disordered stretch occupies residues valine 174 to asparagine 298. Residues aspartate 194–serine 208 are compositionally biased toward low complexity. Positions aspartate 209–glutamine 233 are enriched in basic and acidic residues. Residues glycine 275–asparagine 298 show a composition bias toward low complexity.

The protein belongs to the LEA type 1 family.

The protein is Protein DR_1172 of Deinococcus radiodurans (strain ATCC 13939 / DSM 20539 / JCM 16871 / CCUG 27074 / LMG 4051 / NBRC 15346 / NCIMB 9279 / VKM B-1422 / R1).